Reading from the N-terminus, the 230-residue chain is Protein-L-isoaspartate O-methyltransferase (230 aa).

The active site involves Ser68.

Belongs to the methyltransferase superfamily. L-isoaspartyl/D-aspartyl protein methyltransferase family.

It localises to the cytoplasm. The enzyme catalyses [protein]-L-isoaspartate + S-adenosyl-L-methionine = [protein]-L-isoaspartate alpha-methyl ester + S-adenosyl-L-homocysteine. Catalyzes the methyl esterification of L-isoaspartyl residues in peptides and proteins that result from spontaneous decomposition of normal L-aspartyl and L-asparaginyl residues. It plays a role in the repair and/or degradation of damaged proteins. The polypeptide is Protein-L-isoaspartate O-methyltransferase (Salinibacter ruber (strain DSM 13855 / M31)).